The sequence spans 2387 residues: Highly reducing polyketide synthase curS1 (2387 aa).

In terms of domain architecture, Ketosynthase family 3 (KS3) spans 10 to 433 (DVPIAVVGLS…GTNGHVVLES (424 aa)). Active-site for beta-ketoacyl synthase activity residues include Cys182, His316, and His356. The interval 551–891 (FVFTGQGAQW…ELASELFLKG (341 aa)) is malonyl-CoA:ACP transacylase (MAT) domain. The active-site For malonyltransferase activity is the Ser641. The N-terminal hotdog fold stretch occupies residues 940–1075 (KSIIGAQVPM…GLITIDYAET (136 aa)). In terms of domain architecture, PKS/mFAS DH spans 940–1259 (KSIIGAQVPM…VSELENDSGE (320 aa)). A dehydratase (DH) domain region spans residues 942–1256 (IIGAQVPMMD…DYRVSELEND (315 aa)). Catalysis depends on His972, which acts as the Proton acceptor; for dehydratase activity. The segment at 1103 to 1259 (SYTYSKEDFY…VSELENDSGE (157 aa)) is C-terminal hotdog fold. Asp1169 acts as the Proton donor; for dehydratase activity in catalysis. The enoylreductase (ER) domain stretch occupies residues 1673–1987 (GLMDTLTFIE…QGKHRGKLVL (315 aa)). A catalytic ketoreductase (KRc) domain region spans residues 2011–2191 (STYLFIGGLG…VAVDLGIMRD (181 aa)). The 78-residue stretch at 2302–2379 (EAVVIITDAL…VFAGKIAEKS (78 aa)) folds into the Carrier domain. Ser2339 carries the post-translational modification O-(pantetheine 4'-phosphoryl)serine.

Its pathway is mycotoxin biosynthesis. Its function is as follows. Highly reducing polyketide synthase; part of the gene cluster that mediates the biosynthesis of 10,11-dehydrocurvularin, a prevalent fungal phytotoxin with heat shock response and immune-modulatory activities. The highly reducing polyketide synthase curS1 is responsible for biosynthesis up to the tetraketide stage. The non-reducing polyketide synthase curS2 then conducts four additional chain extension cycles, producing the unreduced part of the nascent octaketide from C-1 to C-8 in 10,11-dehydrocurvularin. The polypeptide is Highly reducing polyketide synthase curS1 (Aspergillus terreus).